A 247-amino-acid polypeptide reads, in one-letter code: GTP cyclohydrolase 1 type 2 homolog (247 aa).

A divalent metal cation is bound by residues His-63, His-64, Asp-101, His-215, and Glu-219.

It belongs to the GTP cyclohydrolase I type 2/NIF3 family. As to quaternary structure, homohexamer.

This Buchnera aphidicola subsp. Schizaphis graminum (strain Sg) protein is GTP cyclohydrolase 1 type 2 homolog.